Reading from the N-terminus, the 930-residue chain is Isoleucine--tRNA ligase (930 aa).

Positions 57-67 (PYANGHIHLGT) match the 'HIGH' region motif. Glu-559 contributes to the L-isoleucyl-5'-AMP binding site. The 'KMSKS' region motif lies at 600–604 (KMSKS). Residue Lys-603 participates in ATP binding. Residues Cys-899, Cys-902, Cys-918, and Cys-921 each contribute to the Zn(2+) site.

The protein belongs to the class-I aminoacyl-tRNA synthetase family. IleS type 1 subfamily. As to quaternary structure, monomer. Zn(2+) serves as cofactor.

The protein resides in the cytoplasm. The catalysed reaction is tRNA(Ile) + L-isoleucine + ATP = L-isoleucyl-tRNA(Ile) + AMP + diphosphate. Catalyzes the attachment of isoleucine to tRNA(Ile). As IleRS can inadvertently accommodate and process structurally similar amino acids such as valine, to avoid such errors it has two additional distinct tRNA(Ile)-dependent editing activities. One activity is designated as 'pretransfer' editing and involves the hydrolysis of activated Val-AMP. The other activity is designated 'posttransfer' editing and involves deacylation of mischarged Val-tRNA(Ile). This chain is Isoleucine--tRNA ligase, found in Desulforudis audaxviator (strain MP104C).